Consider the following 132-residue polypeptide: Large ribosomal subunit protein bL17 (132 aa).

Belongs to the bacterial ribosomal protein bL17 family. In terms of assembly, part of the 50S ribosomal subunit. Contacts protein L32.

In Shewanella sediminis (strain HAW-EB3), this protein is Large ribosomal subunit protein bL17.